Here is a 450-residue protein sequence, read N- to C-terminus: UDP-N-acetylmuramoylalanine--D-glutamate ligase (450 aa).

118-124 serves as a coordination point for ATP; that stretch reads GSNGKTT.

This sequence belongs to the MurCDEF family.

It localises to the cytoplasm. It catalyses the reaction UDP-N-acetyl-alpha-D-muramoyl-L-alanine + D-glutamate + ATP = UDP-N-acetyl-alpha-D-muramoyl-L-alanyl-D-glutamate + ADP + phosphate + H(+). Its pathway is cell wall biogenesis; peptidoglycan biosynthesis. Functionally, cell wall formation. Catalyzes the addition of glutamate to the nucleotide precursor UDP-N-acetylmuramoyl-L-alanine (UMA). This is UDP-N-acetylmuramoylalanine--D-glutamate ligase from Halalkalibacterium halodurans (strain ATCC BAA-125 / DSM 18197 / FERM 7344 / JCM 9153 / C-125) (Bacillus halodurans).